The sequence spans 324 residues: Muscleblind-like protein (324 aa).

2 consecutive C3H1-type zinc fingers follow at residues 38–66 (WLQV…HPPP) and 72–100 (QGRV…HPPQ).

Belongs to the muscleblind family. As to expression, expressed in neurons around the pharynx.

The protein resides in the nucleus. Binds to RNA with repeat sequences 5'-CUG-3' and 5'-CCUG-3'. This is Muscleblind-like protein (mbl-1) from Caenorhabditis elegans.